We begin with the raw amino-acid sequence, 124 residues long: Snaclec rhodocetin subunit delta (124 aa).

3 cysteine pairs are disulfide-bonded: C1-C12, C29-C120, and C95-C112. Residues 8–121 form the C-type lectin domain; the sequence is YNGYCYRVFS…CEKTVSFVCK (114 aa).

Belongs to the snaclec family. As to quaternary structure, heterotetramer of subunit alpha, beta, gamma and delta; only the gamma and the delta subunits are disulfide-linked. Alpha-beta heterodimer and gamma-delta heterodimer associate orthogonally, giving a cruciform conformation. This heterotetramer may covalently dimerizes thanks to the gamma subunit. Expressed by the venom gland.

The protein localises to the secreted. Its function is as follows. Potent inhibitor of collagen-induced platelet aggregation. It acts by binding to the integrin alpha2A domain and blocks collagen binding to integrin alpha-2/beta-1 (ITGA2/ITGB1). The gamma/delta subunits mainly contribute to this activity. In Calloselasma rhodostoma (Malayan pit viper), this protein is Snaclec rhodocetin subunit delta.